Reading from the N-terminus, the 129-residue chain is MAKAPVRTRKRVRKQVSDGVAHVHASFNNTIVTITDRQGNALGWATAGGSGFRGSRKSTPFAAQVAAERCADAVKEYGIKNLEVMVKGPGPGRESTIRALNAAGFRITNITDVTPIPHNGCRPPKKRRV.

The protein belongs to the universal ribosomal protein uS11 family. In terms of assembly, part of the 30S ribosomal subunit. Interacts with proteins S7 and S18. Binds to IF-3.

Its function is as follows. Located on the platform of the 30S subunit, it bridges several disparate RNA helices of the 16S rRNA. Forms part of the Shine-Dalgarno cleft in the 70S ribosome. In Serratia proteamaculans (strain 568), this protein is Small ribosomal subunit protein uS11.